The primary structure comprises 405 residues: Tryptophan synthase beta chain (405 aa).

Lysine 95 carries the N6-(pyridoxal phosphate)lysine modification.

It belongs to the TrpB family. As to quaternary structure, tetramer of two alpha and two beta chains. It depends on pyridoxal 5'-phosphate as a cofactor.

The catalysed reaction is (1S,2R)-1-C-(indol-3-yl)glycerol 3-phosphate + L-serine = D-glyceraldehyde 3-phosphate + L-tryptophan + H2O. Its pathway is amino-acid biosynthesis; L-tryptophan biosynthesis; L-tryptophan from chorismate: step 5/5. The beta subunit is responsible for the synthesis of L-tryptophan from indole and L-serine. The sequence is that of Tryptophan synthase beta chain from Pseudomonas putida (strain ATCC 47054 / DSM 6125 / CFBP 8728 / NCIMB 11950 / KT2440).